The primary structure comprises 124 residues: Large ribosomal subunit protein bL12 (124 aa).

The protein belongs to the bacterial ribosomal protein bL12 family. Homodimer. Part of the ribosomal stalk of the 50S ribosomal subunit. Forms a multimeric L10(L12)X complex, where L10 forms an elongated spine to which 2 to 4 L12 dimers bind in a sequential fashion. Binds GTP-bound translation factors.

In terms of biological role, forms part of the ribosomal stalk which helps the ribosome interact with GTP-bound translation factors. Is thus essential for accurate translation. The chain is Large ribosomal subunit protein bL12 from Cupriavidus metallidurans (strain ATCC 43123 / DSM 2839 / NBRC 102507 / CH34) (Ralstonia metallidurans).